Consider the following 190-residue polypeptide: Shikimate kinase (190 aa).

An ATP-binding site is contributed by 15–20 (GSGKST). Residue Ser-19 coordinates Mg(2+). Substrate-binding residues include Asp-37, Arg-61, and Gly-83. Arg-121 contacts ATP. Arg-148 is a binding site for substrate.

The protein belongs to the shikimate kinase family. As to quaternary structure, monomer. Mg(2+) is required as a cofactor.

The protein localises to the cytoplasm. It catalyses the reaction shikimate + ATP = 3-phosphoshikimate + ADP + H(+). It participates in metabolic intermediate biosynthesis; chorismate biosynthesis; chorismate from D-erythrose 4-phosphate and phosphoenolpyruvate: step 5/7. In terms of biological role, catalyzes the specific phosphorylation of the 3-hydroxyl group of shikimic acid using ATP as a cosubstrate. This chain is Shikimate kinase, found in Chlorobium chlorochromatii (strain CaD3).